The primary structure comprises 297 residues: 4-hydroxy-tetrahydrodipicolinate synthase (297 aa).

Thr-49 is a pyruvate binding site. Tyr-137 functions as the Proton donor/acceptor in the catalytic mechanism. Lys-165 functions as the Schiff-base intermediate with substrate in the catalytic mechanism. Position 208 (Ile-208) interacts with pyruvate.

Belongs to the DapA family. As to quaternary structure, homotetramer; dimer of dimers.

The protein localises to the cytoplasm. The enzyme catalyses L-aspartate 4-semialdehyde + pyruvate = (2S,4S)-4-hydroxy-2,3,4,5-tetrahydrodipicolinate + H2O + H(+). The protein operates within amino-acid biosynthesis; L-lysine biosynthesis via DAP pathway; (S)-tetrahydrodipicolinate from L-aspartate: step 3/4. Functionally, catalyzes the condensation of (S)-aspartate-beta-semialdehyde [(S)-ASA] and pyruvate to 4-hydroxy-tetrahydrodipicolinate (HTPA). The sequence is that of 4-hydroxy-tetrahydrodipicolinate synthase from Gluconacetobacter diazotrophicus (strain ATCC 49037 / DSM 5601 / CCUG 37298 / CIP 103539 / LMG 7603 / PAl5).